The sequence spans 396 residues: Acetyl-CoA acetyltransferase (396 aa).

Cys-89 functions as the Acyl-thioester intermediate in the catalytic mechanism. CoA-binding positions include 223-225 (RKS) and Ser-249. Residues His-352 and Cys-382 each act as proton acceptor in the active site.

It belongs to the thiolase-like superfamily. Thiolase family.

It is found in the cytoplasm. The enzyme catalyses 2 acetyl-CoA = acetoacetyl-CoA + CoA. Its pathway is lipid metabolism; butanoate metabolism. Functionally, involved in syntrophic growth of S.wolfei with butyrate, as part of the butyrate oxidation pathway. Probably catalyzes the beta-keto thiolysis of acetoacetyl-CoA, leading to 2 acetyl-CoA molecules. The sequence is that of Acetyl-CoA acetyltransferase from Syntrophomonas wolfei subsp. wolfei (strain DSM 2245B / Goettingen).